We begin with the raw amino-acid sequence, 143 residues long: Small ribosomal subunit protein uS12 (143 aa).

The span at 1–20 shows a compositional bias: basic residues; that stretch reads MGKCRGLRTARKLRSHRRDH. The interval 1–26 is disordered; it reads MGKCRGLRTARKLRSHRRDHKWHDKQ. Residue K37 forms a Glycyl lysine isopeptide (Lys-Gly) (interchain with G-Cter in SUMO2) linkage. The residue at position 54 (K54) is an N6-succinyllysine. P62 carries the 3-hydroxyproline modification. At K135 the chain carries N6-acetyllysine.

The protein belongs to the universal ribosomal protein uS12 family. As to quaternary structure, component of the 40S small ribosomal subunit. Part of the small subunit (SSU) processome, composed of more than 70 proteins and the RNA chaperone small nucleolar RNA (snoRNA) U3. (Microbial infection) Interacts with the African swine fever virus (ASFV) ubiquitin-conjugating enzyme UBCv1; this interaction probably plays a role in the viral regulation of host protein synthesis. Hydroxylation at Pro-62 affects translation termination efficiency.

The protein localises to the cytoplasm. The protein resides in the cytosol. It localises to the rough endoplasmic reticulum. It is found in the nucleus. Its subcellular location is the nucleolus. In terms of biological role, component of the ribosome, a large ribonucleoprotein complex responsible for the synthesis of proteins in the cell. The small ribosomal subunit (SSU) binds messenger RNAs (mRNAs) and translates the encoded message by selecting cognate aminoacyl-transfer RNA (tRNA) molecules. The large subunit (LSU) contains the ribosomal catalytic site termed the peptidyl transferase center (PTC), which catalyzes the formation of peptide bonds, thereby polymerizing the amino acids delivered by tRNAs into a polypeptide chain. The nascent polypeptides leave the ribosome through a tunnel in the LSU and interact with protein factors that function in enzymatic processing, targeting, and the membrane insertion of nascent chains at the exit of the ribosomal tunnel. Plays an important role in translational accuracy. Part of the small subunit (SSU) processome, first precursor of the small eukaryotic ribosomal subunit. During the assembly of the SSU processome in the nucleolus, many ribosome biogenesis factors, an RNA chaperone and ribosomal proteins associate with the nascent pre-rRNA and work in concert to generate RNA folding, modifications, rearrangements and cleavage as well as targeted degradation of pre-ribosomal RNA by the RNA exosome. This is Small ribosomal subunit protein uS12 (RPS23) from Sus scrofa (Pig).